The following is a 726-amino-acid chain: Delta-1-pyrroline-5-carboxylate synthase B (726 aa).

Residues 1–296 (MTEIDRSRAF…WAPVVDTTSR (296 aa)) form a glutamate 5-kinase region. Substrate contacts are provided by S60, D157, and N176. Residues 196–197 (SD) and 236–242 (RGGMTAK) contribute to the ATP site. A gamma-glutamyl phosphate reductase region spans residues 297-717 (DMAVAARESS…YTHKDLPVLQ (421 aa)).

It in the N-terminal section; belongs to the glutamate 5-kinase family. In the C-terminal section; belongs to the gamma-glutamyl phosphate reductase family.

The catalysed reaction is L-glutamate + ATP = L-glutamyl 5-phosphate + ADP. The enzyme catalyses L-glutamate 5-semialdehyde + phosphate + NADP(+) = L-glutamyl 5-phosphate + NADPH + H(+). Its pathway is amino-acid biosynthesis; L-proline biosynthesis; L-glutamate 5-semialdehyde from L-glutamate: step 1/2. The protein operates within amino-acid biosynthesis; L-proline biosynthesis; L-glutamate 5-semialdehyde from L-glutamate: step 2/2. In terms of biological role, P5CS plays a key role in proline biosynthesis, leading to osmoregulation in plants. The protein is Delta-1-pyrroline-5-carboxylate synthase B (P5CSB) of Arabidopsis thaliana (Mouse-ear cress).